We begin with the raw amino-acid sequence, 591 residues long: General transcription and DNA repair factor IIH subunit TFB1-1 (591 aa).

BSD domains lie at 112–166 and 191–243; these read STSS…GKDS and RTNR…YLYS.

It belongs to the TFB1 family. Component of the 7-subunit TFIIH core complex composed of XPB, XPD, TFB1/GTF2H1, GTF2H2/P44, TFB4/GTF2H3, TFB2/GTF2H4 and TFB5/GTF2H5, which is active in NER. The core complex associates with the 3-subunit CDK-activating kinase (CAK) module composed of CYCH1/cyclin H1, CDKD and MAT1/At4g30820 to form the 10-subunit holoenzyme (holo-TFIIH) active in transcription.

It localises to the nucleus. In terms of biological role, component of the general transcription and DNA repair factor IIH (TFIIH) core complex, which is involved in general and transcription-coupled nucleotide excision repair (NER) of damaged DNA and, when complexed to CAK, in RNA transcription by RNA polymerase II. In NER, TFIIH acts by opening DNA around the lesion to allow the excision of the damaged oligonucleotide and its replacement by a new DNA fragment. In transcription, TFIIH has an essential role in transcription initiation. When the pre-initiation complex (PIC) has been established, TFIIH is required for promoter opening and promoter escape. Phosphorylation of the C-terminal tail (CTD) of the largest subunit of RNA polymerase II by the kinase module CAK controls the initiation of transcription. In Arabidopsis thaliana (Mouse-ear cress), this protein is General transcription and DNA repair factor IIH subunit TFB1-1.